The sequence spans 157 residues: Protein Smg (157 aa).

This sequence belongs to the Smg family.

The chain is Protein Smg from Salmonella agona (strain SL483).